The primary structure comprises 341 residues: Ribosomal RNA small subunit methyltransferase C (341 aa).

It belongs to the methyltransferase superfamily. RsmC family. Monomer.

The protein localises to the cytoplasm. The catalysed reaction is guanosine(1207) in 16S rRNA + S-adenosyl-L-methionine = N(2)-methylguanosine(1207) in 16S rRNA + S-adenosyl-L-homocysteine + H(+). In terms of biological role, specifically methylates the guanine in position 1207 of 16S rRNA in the 30S particle. This chain is Ribosomal RNA small subunit methyltransferase C, found in Shewanella pealeana (strain ATCC 700345 / ANG-SQ1).